A 962-amino-acid chain; its full sequence is Glutamate receptor 1 (962 aa).

An N-terminal signal peptide occupies residues 1–25 (MFSSFSFLNMFGVLFTVFNLTVVQP). Residues 26–591 (YPSHIIIKSF…SVFSFMQPLS (566 aa)) are Extracellular-facing. N-linked (GlcNAc...) asparagine glycosylation is found at asparagine 190, asparagine 220, asparagine 275, asparagine 333, asparagine 441, and asparagine 482. A helical membrane pass occupies residues 592 to 612 (TEIWMYIIFAYIGVSVVIFLV). Residues 613 to 668 (SRFSPYEWRVEETSRGGFTISNDFSVYNCLWFTLAAFMQQGTDILPRSISGRIASS) are Cytoplasmic-facing. Residues 669 to 689 (AWWFFTMIIVSSYTANLAAFL) traverse the membrane as a helical segment. The Extracellular segment spans residues 690–855 (TLEKMQAPIE…GSSASLNLSK (166 aa)). Asparagine 852 is a glycosylation site (N-linked (GlcNAc...) asparagine). A helical membrane pass occupies residues 856–876 (VAGIFYILMGGMVISMLAALG). At 877-962 (EFLYRSRIEA…PANTLYNTAV (86 aa)) the chain is on the cytoplasmic side.

This sequence belongs to the glutamate-gated ion channel (TC 1.A.10.1) family. As to quaternary structure, interacts with sol-1. Interacts with cni-1; the interaction negatively regulates export of glr-1 from the endoplasmic reticulum to synapses. Interacts with usp-46; the interaction results in deubiquitination of glr-1. Post-translationally, ubiquitinated. Deubiquitinated by usp-46 which prevents its degradation. In terms of processing, glycosylated. As to expression, command interneurons of the locomotory control circuit (AIB, AVA, AVB, AVD, AVE and PVC) and motor neurons (RMD, RIM, SMD, AVG, PVQ and URY).

It localises to the postsynaptic cell membrane. The protein resides in the endoplasmic reticulum. It is found in the synapse. Its subcellular location is the cell membrane. The protein localises to the recycling endosome. It localises to the cell projection. The protein resides in the dendrite. It is found in the perikaryon. In terms of biological role, non-NMDA (N-methyl-D-aspartate) ionotropic glutamate receptor. L-glutamate acts as an excitatory neurotransmitter at many synapses in the central nervous system. The postsynaptic actions of glutamate are mediated by a variety of receptors that are named according to their selective agonists. May contribute to a sensory discrimination between mechanical and chemical stimuli. Plays a role in controlling movement in response to environmental cues such as food availability and mechanosensory stimulation such as the nose touch response. In AIB interneurons, promotes omega turns, a movement that frequently follows backwards locomotion or 'reversals' in response to environmental cues while possibly playing an inhibitory role in alternative neurons to inhibit omega turns. The protein is Glutamate receptor 1 of Caenorhabditis elegans.